Consider the following 485-residue polypeptide: Zinc finger protein 165 (485 aa).

Residue lysine 23 forms a Glycyl lysine isopeptide (Lys-Gly) (interchain with G-Cter in SUMO2) linkage. In terms of domain architecture, SCAN box spans 62–127 (GPREALSRLR…EEAVTILEDL (66 aa)). Glycyl lysine isopeptide (Lys-Gly) (interchain with G-Cter in SUMO2) cross-links involve residues lysine 162 and lysine 195. The C2H2-type 1; degenerate zinc finger occupies 290–314 (KSCKHGTCDQSFKWNSDFINHQIIY). 5 C2H2-type zinc fingers span residues 344 to 366 (HQCN…QRIH), 372 to 394 (YECN…RRIH), 400 to 422 (FGCK…QRIH), 428 to 450 (YECS…FRIH), and 456 to 478 (YECS…QRIH).

The protein belongs to the krueppel C2H2-type zinc-finger protein family. In terms of tissue distribution, expressed specifically in testis.

It localises to the nucleus. May be involved in transcriptional regulation. This Homo sapiens (Human) protein is Zinc finger protein 165 (ZNF165).